Consider the following 257-residue polypeptide: NAD kinase (257 aa).

Asp-46 functions as the Proton acceptor in the catalytic mechanism. Residues 46–47, 116–117, Asp-146, Ala-154, 157–162, and Asn-218 contribute to the NAD(+) site; these read DG, NE, and TAYNLS.

The protein belongs to the NAD kinase family. A divalent metal cation serves as cofactor.

It localises to the cytoplasm. It carries out the reaction NAD(+) + ATP = ADP + NADP(+) + H(+). Its function is as follows. Involved in the regulation of the intracellular balance of NAD and NADP, and is a key enzyme in the biosynthesis of NADP. Catalyzes specifically the phosphorylation on 2'-hydroxyl of the adenosine moiety of NAD to yield NADP. This Brucella suis biovar 1 (strain 1330) protein is NAD kinase.